We begin with the raw amino-acid sequence, 225 residues long: UPF0758 protein SZO_09140 (225 aa).

The MPN domain occupies 102 to 224; sequence PVLSSAQVAE…YYSFREKSDL (123 aa). Residues His-173, His-175, and Asp-186 each contribute to the Zn(2+) site. Residues 173–186 carry the JAMM motif motif; sequence HNHPSGLTKPSAND.

Belongs to the UPF0758 family.

In Streptococcus equi subsp. zooepidemicus (strain H70), this protein is UPF0758 protein SZO_09140.